The primary structure comprises 105 residues: ESAT-6-like protein EsxU (105 aa).

This sequence belongs to the WXG100 family. CFP-10 subfamily. In terms of assembly, forms a tight 1:1 complex with EsxT. Complex formation results in induction of alpha-helical conformation and stability against chemical denaturation.

The protein localises to the secreted. This Mycobacterium tuberculosis (strain ATCC 25618 / H37Rv) protein is ESAT-6-like protein EsxU.